The following is a 194-amino-acid chain: Glycerol-3-phosphate acyltransferase (194 aa).

5 helical membrane-spanning segments follow: residues 4 to 24 (ELILTAVAYIVGSIPTGLLLA), 80 to 100 (WVAAVGLAAFLGHVYTIFLGF), 112 to 132 (VFLGVSPLSVLGALALFIGIV), 137 to 157 (YISLGSIIAAAAMPLFVAAVE), and 161 to 181 (LLVGMTLVIAVIVIVKHRENI).

It belongs to the PlsY family. Probably interacts with PlsX.

It is found in the cell inner membrane. The enzyme catalyses an acyl phosphate + sn-glycerol 3-phosphate = a 1-acyl-sn-glycero-3-phosphate + phosphate. It functions in the pathway lipid metabolism; phospholipid metabolism. Catalyzes the transfer of an acyl group from acyl-phosphate (acyl-PO(4)) to glycerol-3-phosphate (G3P) to form lysophosphatidic acid (LPA). This enzyme utilizes acyl-phosphate as fatty acyl donor, but not acyl-CoA or acyl-ACP. In Geobacter sulfurreducens (strain ATCC 51573 / DSM 12127 / PCA), this protein is Glycerol-3-phosphate acyltransferase.